A 369-amino-acid chain; its full sequence is Extracellular signal-regulated kinase 2 (369 aa).

The Protein kinase domain occupies 14-304 (YEVLQKIGKG…AEEALAHPFV (291 aa)). ATP contacts are provided by residues 20 to 28 (IGKGAYGIV) and Lys-43. Asp-137 functions as the Proton acceptor in the catalytic mechanism. The residue at position 176 (Thr-176) is a Phosphothreonine. Residues 176-178 (TEY) carry the TXY motif. A Phosphotyrosine modification is found at Tyr-178. Positions 346–369 (KKKEERKKQTNPTKPDTTAPTLST) are disordered. Polar residues predominate over residues 355–369 (TNPTKPDTTAPTLST).

Belongs to the protein kinase superfamily. CMGC Ser/Thr protein kinase family. MAP kinase subfamily. Requires Mg(2+) as cofactor. Post-translationally, dually phosphorylated on Thr-176 and Tyr-178, which activates the enzyme.

It catalyses the reaction L-seryl-[protein] + ATP = O-phospho-L-seryl-[protein] + ADP + H(+). The catalysed reaction is L-threonyl-[protein] + ATP = O-phospho-L-threonyl-[protein] + ADP + H(+). With respect to regulation, activated by tyrosine and threonine phosphorylation. Functionally, implicated in the relay of the cAMP chemotactic signal and cell differentiation. Important for receptor-mediated activation of adenylyl cyclase. The protein is Extracellular signal-regulated kinase 2 (erkB) of Dictyostelium discoideum (Social amoeba).